The following is a 296-amino-acid chain: Protoheme IX farnesyltransferase 1 (296 aa).

8 helical membrane passes run 14 to 34 (IVLLLVITAVTTMYAGDALSA), 41 to 61 (LWDYAHLMAAGALASAGSSAL), 86 to 106 (IGENIVLAYGLAISSAAVVYA), 108 to 128 (FLLNAPTAFFIALGIFSYVII), 141 to 161 (IVIGGIAGSAASWAGWTAATG), 165 to 185 (LLGFLIGFLVFVWTPSHFWCL), 230 to 250 (AFGMGLVYLVIAVASGGLMLV), and 274 to 294 (YLTIIFAAVALDAAFHYPFPF).

The protein belongs to the UbiA prenyltransferase family. Protoheme IX farnesyltransferase subfamily.

It localises to the cell membrane. It carries out the reaction heme b + (2E,6E)-farnesyl diphosphate + H2O = Fe(II)-heme o + diphosphate. It functions in the pathway porphyrin-containing compound metabolism; heme O biosynthesis; heme O from protoheme: step 1/1. Converts heme B (protoheme IX) to heme O by substitution of the vinyl group on carbon 2 of heme B porphyrin ring with a hydroxyethyl farnesyl side group. This chain is Protoheme IX farnesyltransferase 1, found in Cenarchaeum symbiosum (strain A).